Reading from the N-terminus, the 444-residue chain is uncharacterized protein (444 aa).

The region spanning 164-381 (GAYGKSFLLE…EKALKKEGIR (218 aa)) is the Radical SAM core domain. Residues Cys-178, Cys-182, and Cys-185 each contribute to the [4Fe-4S] cluster site.

Requires [4Fe-4S] cluster as cofactor.

This is an uncharacterized protein from Methanocaldococcus jannaschii (strain ATCC 43067 / DSM 2661 / JAL-1 / JCM 10045 / NBRC 100440) (Methanococcus jannaschii).